Reading from the N-terminus, the 30-residue chain is Basic phospholipase A2 CM-I (30 aa).

This sequence belongs to the phospholipase A2 family. Group I subfamily. Requires Ca(2+) as cofactor. As to expression, expressed by the venom gland.

The protein resides in the secreted. It carries out the reaction a 1,2-diacyl-sn-glycero-3-phosphocholine + H2O = a 1-acyl-sn-glycero-3-phosphocholine + a fatty acid + H(+). Snake venom phospholipase A2 (PLA2) that shows weak anticoagulant activity. Is more catalytically active than the strong anticoagulant protein CM-IV found in this venom. Acts by inhibiting the complex composed of tissue factor (F3) and coagulation factor VIIa (F7) (TF-VIIa complex) by only enzymatic mechanism. PLA2 catalyzes the calcium-dependent hydrolysis of the 2-acyl groups in 3-sn-phosphoglycerides. In Naja nigricollis (Black-necked spitting cobra), this protein is Basic phospholipase A2 CM-I.